The primary structure comprises 114 residues: MADNLSQSFDKSAMTEEERRHIKKEIRKQIVVFALMIFLTLMSFMAVATDVIPRSFAIPFIFILAVIQFALQLFFFMHMKDKDHGWANAFMISGIFITVPTIAALMLLLGVNKI.

Helical transmembrane passes span Gln-29–Thr-49, Phe-56–Phe-76, and Ala-89–Leu-109.

Belongs to the cytochrome c oxidase bacterial subunit 4 family.

The protein localises to the cell membrane. It catalyses the reaction 4 Fe(II)-[cytochrome c] + O2 + 8 H(+)(in) = 4 Fe(III)-[cytochrome c] + 2 H2O + 4 H(+)(out). The chain is Cytochrome c oxidase subunit 4B (ctaF) from Alkalihalophilus pseudofirmus (strain ATCC BAA-2126 / JCM 17055 / OF4) (Bacillus pseudofirmus).